Consider the following 446-residue polypeptide: UPF0597 protein DvMF_1488 (446 aa).

Belongs to the UPF0597 family.

The protein is UPF0597 protein DvMF_1488 of Nitratidesulfovibrio vulgaris (strain DSM 19637 / Miyazaki F) (Desulfovibrio vulgaris).